The sequence spans 375 residues: cAMP-dependent protein kinase regulatory subunit (375 aa).

The segment at 28 to 142 is dimerization and phosphorylation; the sequence is RFCADYFNER…SLYKSVSHNF (115 aa). The span at 41 to 50 shows a compositional bias: basic and acidic residues; sequence REEADDDGPR. Residues 41–102 are disordered; sequence REEADDDGPR…EPAAPFTRRT (62 aa). Over residues 64–82 the composition is skewed to polar residues; that stretch reads GSSSRSTDGSLFRSSFADT. Low complexity predominate over residues 83–97; sequence SSEGPGSASSEPAAP. A Phosphoserine modification is found at S103. 3',5'-cyclic AMP contacts are provided by residues 143 to 258, E208, R217, 261 to 375, E328, and R337; these read LFGN…FLKE and ILSD…DPTK.

This sequence belongs to the cAMP-dependent kinase regulatory chain family. Tetramer, composed of 2 regulatory (R) and 2 catalytic (C) subunits. In the presence of cAMP it dissociates into 2 active monomeric C subunits and an R dimer.

The protein is cAMP-dependent protein kinase regulatory subunit (PKAR) of Yarrowia lipolytica (strain CLIB 122 / E 150) (Yeast).